Consider the following 448-residue polypeptide: Adenylosuccinate synthetase (448 aa).

GTP is bound by residues 22-28 (GDEGKGK) and 50-52 (GHT). Residue Asp23 is the Proton acceptor of the active site. Mg(2+)-binding residues include Asp23 and Gly50. IMP is bound by residues 23-26 (DEGK), 48-51 (NAGH), Thr139, Arg153, Gln234, Thr249, and Arg321. His51 acts as the Proton donor in catalysis. 317–323 (SVTGRPR) serves as a coordination point for substrate. GTP contacts are provided by residues Arg323, 349–351 (KLD), and 431–433 (STG).

The protein belongs to the adenylosuccinate synthetase family. In terms of assembly, homodimer. Mg(2+) is required as a cofactor.

It localises to the cytoplasm. It carries out the reaction IMP + L-aspartate + GTP = N(6)-(1,2-dicarboxyethyl)-AMP + GDP + phosphate + 2 H(+). The protein operates within purine metabolism; AMP biosynthesis via de novo pathway; AMP from IMP: step 1/2. Its function is as follows. Plays an important role in the de novo pathway of purine nucleotide biosynthesis. Catalyzes the first committed step in the biosynthesis of AMP from IMP. This chain is Adenylosuccinate synthetase, found in Burkholderia thailandensis (strain ATCC 700388 / DSM 13276 / CCUG 48851 / CIP 106301 / E264).